A 509-amino-acid polypeptide reads, in one-letter code: Pancreatic secretory granule membrane major glycoprotein GP2 (509 aa).

The N-terminal stretch at 1 to 21 (MVGSYVLWLALASCILTLASP) is a signal peptide. The D10C stretch occupies residues 36–56 (DPCQNYTLLDEPSRSTENTEG). Disulfide bonds link Cys38/Cys132, Cys60/Cys147, Cys82/Cys120, Cys88/Cys152, Cys113/Cys121, Cys162/Cys172, Cys166/Cys181, Cys183/Cys213, Cys201/Cys292, and Cys233/Cys256. 3 N-linked (GlcNAc...) asparagine glycosylation sites follow: Asn40, Asn97, and Asn109. An EGF-like domain is found at 158–202 (ATDKCKNLCRPEEACSFLNGTWDCFCRSDLNSSDVHSLQPRLNCG). Residues Asn176, Asn188, and Asn232 are each glycosylated (N-linked (GlcNAc...) asparagine). Positions 200–293 (NCGAKEIQVS…TILNINFQCA (94 aa)) are ZP-N. A ZP domain is found at 200-456 (NCGAKEIQVS…PCCSRSQQRS (257 aa)). N-linked (GlcNAc...) asparagine glycans are attached at residues Asn263 and Asn314. A flexible ZP-N/ZP-C linker region spans residues 294–317 (YPLDMKVSLQTALHPIVSSLNISV). Residues 318 to 329 (DGEGEFTVRMAL) are internal hydrophobic patch (IHP). Positions 318 to 456 (DGEGEFTVRM…PCCSRSQQRS (139 aa)) are ZP-C. 3 disulfides stabilise this stretch: Cys373/Cys433, Cys394/Cys449, and Cys438/Cys445. The segment at 463–471 (PARVLDLGP) is external hydrophobic patch (EHP). Residue Asp484 is the site of GPI-anchor amidated aspartate attachment. The propeptide at 485–509 (GTPSTAGFLLAWPMLLLPILLAELF) is removed in mature form.

In terms of assembly, interacts with SYCN. Interacts with bacterial adhesin fimH. Post-translationally, N-glycosylated. As to expression, expressed in pancreas.

Its subcellular location is the zymogen granule membrane. It is found in the secreted. The protein localises to the cell membrane. The protein resides in the apical cell membrane. It localises to the membrane raft. Its subcellular location is the endosome. Functions as an intestinal M-cell transcytotic receptor specific of type-I-piliated bacteria that participates in the mucosal immune response toward these bacteria. At the apical membrane of M-cells it binds fimH, a protein of the bacteria type I pilus tip. Internalizes bound bacteria, like E.coli and S.typhimurium, from the lumen of the intestine and delivers them, through M-cells, to the underlying organized lymphoid follicles where they are captured by antigen-presenting dendritic cells to elicit a mucosal immune response. In Canis lupus familiaris (Dog), this protein is Pancreatic secretory granule membrane major glycoprotein GP2.